A 299-amino-acid polypeptide reads, in one-letter code: Pseudouridine-5'-phosphate glycosidase (299 aa).

Catalysis depends on glutamate 23, which acts as the Proton donor. Substrate-binding residues include lysine 84 and valine 104. Aspartate 136 lines the Mn(2+) pocket. 138-140 (SAD) provides a ligand contact to substrate. Lysine 157 acts as the Nucleophile in catalysis.

This sequence belongs to the pseudouridine-5'-phosphate glycosidase family. In terms of assembly, homotrimer. Requires Mn(2+) as cofactor.

It catalyses the reaction D-ribose 5-phosphate + uracil = psi-UMP + H2O. Catalyzes the reversible cleavage of pseudouridine 5'-phosphate (PsiMP) to ribose 5-phosphate and uracil. Functions biologically in the cleavage direction, as part of a pseudouridine degradation pathway. This Solibacter usitatus (strain Ellin6076) protein is Pseudouridine-5'-phosphate glycosidase.